The sequence spans 134 residues: Transcription antitermination protein NusB (134 aa).

This sequence belongs to the NusB family.

In terms of biological role, involved in transcription antitermination. Required for transcription of ribosomal RNA (rRNA) genes. Binds specifically to the boxA antiterminator sequence of the ribosomal RNA (rrn) operons. The protein is Transcription antitermination protein NusB of Shewanella sp. (strain MR-4).